Reading from the N-terminus, the 140-residue chain is Small ribosomal subunit protein uS12 (140 aa).

A disordered region spans residues 1 to 44 (MPTFNQLVRKGRKTMEKNSQAPALQKGFNSLRKKTTDASAPQKR). Aspartate 102 is subject to 3-methylthioaspartic acid. Residues 120–140 (VAKRRQARSKYGAKRPKEAKK) are disordered. The segment covering 121–140 (AKRRQARSKYGAKRPKEAKK) has biased composition (basic residues).

This sequence belongs to the universal ribosomal protein uS12 family. As to quaternary structure, part of the 30S ribosomal subunit. Contacts proteins S8 and S17. May interact with IF1 in the 30S initiation complex.

Its function is as follows. With S4 and S5 plays an important role in translational accuracy. In terms of biological role, interacts with and stabilizes bases of the 16S rRNA that are involved in tRNA selection in the A site and with the mRNA backbone. Located at the interface of the 30S and 50S subunits, it traverses the body of the 30S subunit contacting proteins on the other side and probably holding the rRNA structure together. The combined cluster of proteins S8, S12 and S17 appears to hold together the shoulder and platform of the 30S subunit. The sequence is that of Small ribosomal subunit protein uS12 from Lachnoclostridium phytofermentans (strain ATCC 700394 / DSM 18823 / ISDg) (Clostridium phytofermentans).